A 452-amino-acid polypeptide reads, in one-letter code: Chromosomal replication initiator protein DnaA (452 aa).

Residues 1-80 (MSSTVSTLWR…NNDQFMVKIQ (80 aa)) are domain I, interacts with DnaA modulators. Residues 80–114 (QDGIKPTEKTTTNVEQKTQNENCHNEITSQQNYRS) are domain II. Residues 115–332 (YLNKNHVFDN…GALNRVHAHA (218 aa)) form a domain III, AAA+ region region. 4 residues coordinate ATP: G160, G162, K163, and T164. A domain IV, binds dsDNA region spans residues 333–452 (EFTGKAITID…WSNLIRTLSV (120 aa)).

The protein belongs to the DnaA family. In terms of assembly, oligomerizes as a right-handed, spiral filament on DNA at oriC.

It is found in the cytoplasm. Its function is as follows. Plays an essential role in the initiation and regulation of chromosomal replication. ATP-DnaA binds to the origin of replication (oriC) to initiate formation of the DNA replication initiation complex once per cell cycle. Binds the DnaA box (a 9 base pair repeat at the origin) and separates the double-stranded (ds)DNA. Forms a right-handed helical filament on oriC DNA; dsDNA binds to the exterior of the filament while single-stranded (ss)DNA is stabiized in the filament's interior. The ATP-DnaA-oriC complex binds and stabilizes one strand of the AT-rich DNA unwinding element (DUE), permitting loading of DNA polymerase. After initiation quickly degrades to an ADP-DnaA complex that is not apt for DNA replication. Binds acidic phospholipids. The sequence is that of Chromosomal replication initiator protein DnaA from Histophilus somni (strain 129Pt) (Haemophilus somnus).